The sequence spans 359 residues: GTP 3',8-cyclase 1 (359 aa).

Positions 21-241 (RCRRMMGDLR…SLEKRYGRIE (221 aa)) constitute a Radical SAM core domain. Residue Arg-30 participates in GTP binding. Residues Cys-37 and Cys-41 each contribute to the [4Fe-4S] cluster site. Tyr-43 serves as a coordination point for S-adenosyl-L-methionine. Position 44 (Cys-44) interacts with [4Fe-4S] cluster. Arg-80 is a GTP binding site. Gly-84 contributes to the S-adenosyl-L-methionine binding site. Position 115 (Thr-115) interacts with GTP. Ser-139 is an S-adenosyl-L-methionine binding site. Position 176 (Lys-176) interacts with GTP. Met-210 contacts S-adenosyl-L-methionine. The [4Fe-4S] cluster site is built by Cys-273 and Cys-276. GTP is bound at residue 278–280 (RSR). Cys-290 serves as a coordination point for [4Fe-4S] cluster.

This sequence belongs to the radical SAM superfamily. MoaA family. As to quaternary structure, monomer and homodimer. The cofactor is [4Fe-4S] cluster.

It carries out the reaction GTP + AH2 + S-adenosyl-L-methionine = (8S)-3',8-cyclo-7,8-dihydroguanosine 5'-triphosphate + 5'-deoxyadenosine + L-methionine + A + H(+). It functions in the pathway cofactor biosynthesis; molybdopterin biosynthesis. Its function is as follows. Catalyzes the cyclization of GTP to (8S)-3',8-cyclo-7,8-dihydroguanosine 5'-triphosphate. This chain is GTP 3',8-cyclase 1, found in Mycobacterium tuberculosis (strain CDC 1551 / Oshkosh).